Consider the following 700-residue polypeptide: Mitosis inducer protein blt1 (700 aa).

Composition is skewed to polar residues over residues 1–11 (MSKSAFTSKSQ) and 43–53 (PRSTALPNLSN). Disordered regions lie at residues 1-53 (MSKS…NLSN) and 266-293 (TNNRKPVGSDGSNSNFNGGEEQMDSKDQ). Over residues 273–284 (GSDGSNSNFNGG) the composition is skewed to low complexity. The stretch at 496–575 (SVALDDHNRQ…LNMLQKLSMQ (80 aa)) forms a coiled coil. Disordered regions lie at residues 634–659 (FSSFSGSSSKLPVRPSTALTDKRKPS) and 671–700 (SSGSPEKKHVITSSDAGHQRSKSRSFSSKM). Ser636 carries the post-translational modification Phosphoserine.

As to quaternary structure, interacts with cdr2, mid1 and sad1.

It localises to the cytoplasm. Its subcellular location is the cytoskeleton. At the onset of mitosis, forms a medial ring structure before the arrangement of the medial actin ring. Essential for the central positioning of the division septum before the cell divides. The polypeptide is Mitosis inducer protein blt1 (blt1) (Schizosaccharomyces pombe (strain 972 / ATCC 24843) (Fission yeast)).